A 924-amino-acid chain; its full sequence is MVNKENARSVGQQVKWIGSQDELPPVKNLEHKNVYFYQKCIYGPLTLSVGDFILVSNADAAEPDTVSGCDVARILHMYELRELTDREPCRAIVQWYSWPKAIPHNKYDDDEVAIDFSLEVIEEHRPYDNDVALGAIYRKCIVLEGTSKTSAEEILKRHANKLKSTACPMFVSRYRFVKVKRSYRLIPLEIHLEQPEDNARPTRSSRKSLTAHRESKRSISARHDDTAGNKGSSVEKRRRASMAASSSVEFIDVNSFICENKVSPIKIVGGRSVVRLSEKKNAPEINANYLPASPLTEKNAKVETPKSRASAARRNLNLSLDRGADTTADSDCLNYSIVQQTPDPKTPSNDMKIKLRLSERRRSVRLASMDVDPLSLEEAVQEPNAQGRKRLGVANGDIYHTPTKKSKEPLESAAATEQTPSTRRKSILKSATSRLAEGTPRRSIHLSNIVEQRVFEDDEIISTPKRGRSKKTVQDNDEDYSPKKSVQKTPTRTRRSSTTTKTATTPSKGITTATATPMTPSQKMKKIRAGELSPSMQQRTDLPAKDSSKSELQLAREQLHVSVVPKSLPCREREFENIYAFLEGKIQDQCGGCMYVSGVPGTGKTATVTGVIRTLQRMAKQNELPAFEYLEINGMRLTEPRQAYVQIYKQLTGKTVSWEQAHALLEKRFTTPAPRRVTTVLLVDELDILCNRRQDVVYNLLDWPTKSAAKLVVVTIANTMDLPERLLMGKVTSRLGLTRLTFQPYSHKQLQEIVTARLGGSETFKGEAVQLVARKVAAVSGDARRALDICRRATEIADTAAVKCVTMLHVQQALAEMIASAKVQAIRNCSRMEQIFLQAIAAEVTRTGVEETTFMGVYQQVETIAAFMGVTFPPPGRALRLCSKLGAERLIISEHSRNDLFQKILLNVSADDIHYALRVEEMVN.

Residues 45 to 187 (LTLSVGDFIL…KVKRSYRLIP (143 aa)) form the BAH domain. The interval 196–239 (EDNARPTRSSRKSLTAHRESKRSISARHDDTAGNKGSSVEKRRR) is disordered. A compositionally biased stretch (basic and acidic residues) spans 211–227 (AHRESKRSISARHDDTA). 2 positions are modified to phosphoserine: serine 293 and serine 368. Disordered regions lie at residues 377–440 (EEAV…EGTP) and 460–523 (IIST…PSQK). The residue at position 419 (threonine 419) is a Phosphothreonine. Phosphoserine occurs at positions 426 and 430. Residues 496–516 (SSTTTKTATTPSKGITTATAT) show a composition bias toward low complexity. Residue serine 533 is modified to Phosphoserine. ATP is bound by residues valine 564 and 598 to 606 (GVPGTGKTA). Aspartate 684 and glutamate 685 together coordinate Mg(2+). 3 residues coordinate ATP: glutamate 685, asparagine 718, and arginine 784.

The protein belongs to the ORC1 family. As to quaternary structure, ORC is composed of six subunits.

The protein resides in the nucleus. Functionally, component of the origin recognition complex (ORC) that binds origins of replication. DNA-binding is ATP-dependent, however specific DNA sequences that define origins of replication have not been identified so far. ORC is required to assemble the pre-replication complex necessary to initiate DNA replication. In Drosophila melanogaster (Fruit fly), this protein is Origin recognition complex subunit 1 (Orc1).